The chain runs to 326 residues: tRNA-modifying protein YgfZ (326 aa).

Residues W27 and W189 each contribute to the folate site.

This sequence belongs to the tRNA-modifying YgfZ family.

It localises to the cytoplasm. Folate-binding protein involved in regulating the level of ATP-DnaA and in the modification of some tRNAs. It is probably a key factor in regulatory networks that act via tRNA modification, such as initiation of chromosomal replication. In Escherichia fergusonii (strain ATCC 35469 / DSM 13698 / CCUG 18766 / IAM 14443 / JCM 21226 / LMG 7866 / NBRC 102419 / NCTC 12128 / CDC 0568-73), this protein is tRNA-modifying protein YgfZ.